We begin with the raw amino-acid sequence, 3095 residues long: HD protein homolog (3095 aa).

Disordered stretches follow at residues 105–197, 536–561, 1312–1371, 1509–1547, and 2005–2037; these read PHQH…NGNA, QQQQ…TMSG, PPQQ…STVI, KSTS…TTPS, and KELT…KEEE. Positions 115–139 are enriched in polar residues; it reads STNLTDHLSQNSVTPSVPTTPNYQQ. 2 stretches are compositionally biased toward low complexity: residues 140 to 197 and 536 to 551; these read SPST…NGNA and QQQQ…QQQQ. Residues 552-561 are compositionally biased toward polar residues; it reads HNLTSSTMSG. Composition is skewed to low complexity over residues 1315–1368, 1510–1547, and 2008–2018; these read QQQQ…LNNS, STSS…TTPS, and TNNNNNNNNNI.

Belongs to the huntingtin family.

It is found in the cytoplasm. The protein localises to the nucleus. In terms of biological role, may play a role in microtubule-mediated transport or vesicle function. In Dictyostelium discoideum (Social amoeba), this protein is HD protein homolog (htt).